Here is a 297-residue protein sequence, read N- to C-terminus: Manganese efflux system protein MneP (297 aa).

6 helical membrane passes run 12–32 (VALIALIANLILMAGKVFFGL), 43–63 (GIHSAADVVASIAVLAVIGIS), 85–105 (IVGIILVIVSVYILIEAILSF), 111–131 (VPQYSALFAALISYVAKEILY), 155–175 (GDIVASLAAFIGVLLAIIGNS), and 177–197 (GWSYLLYADAIASAIVAYLIF).

It belongs to the cation diffusion facilitator (CDF) transporter (TC 2.A.4) family.

Its subcellular location is the cell membrane. Functionally, primary efflux pump for manganese. May prevent manganese intoxication. The protein is Manganese efflux system protein MneP of Bacillus subtilis (strain 168).